We begin with the raw amino-acid sequence, 193 residues long: Allatostatin A (193 aa).

The N-terminal stretch at 1–25 (MKTSSLIAMRLIIFYLLSVVGRSTA) is a signal peptide. A propeptide spanning residues 26–64 (AVEEAPASSLHIPRLNPLSSNLEYDEPSEKRAYAYISEY) is cleaved from the precursor. Isoleucine 74 is modified (isoleucine amide). Positions 78–84 (WIDNSED) are excised as a propeptide. Isoleucine 94 and isoleucine 105 each carry isoleucine amide. Residues 109-139 (NSGYRPLGMDFSVDNMDFHSREDNLDDFIDD) constitute a propeptide that is removed on maturation. Isoleucine 150 carries the post-translational modification Isoleucine amide. The residue at position 165 (serine 165) is a Serine amide. Residues 169 to 193 (LNDVVGPKYLLGLGKGLSENENLIQ) constitute a propeptide that is removed on maturation.

This sequence belongs to the allatostatin family. As to expression, allatostatins A1, A2 and A3 are expressed in brain, antennal lobes, optical lobes, gnathal ganglia, the retrocerebral complex and thoracic, abdominal and ventral ganglia. Allatostain A4 is expressed in brain (at protein level).

It localises to the secreted. May act as a neurotransmitter or neuromodulator. The protein is Allatostatin A of Camponotus floridanus (Florida carpenter ant).